The chain runs to 655 residues: E3 ubiquitin-protein ligase TRIM32 (655 aa).

The RING-type zinc finger occupies 21-66 (CPICMESFTEEQLRPKLLHCGHTICRQCLEKLLASSINGVRCPFCS). A Phosphoserine; by CHEK2 modification is found at S56. Residues 96 to 139 (VGLLMCRGCGRRLPRQFCRSCGVVLCEPCREADHQPPGHCTLPV) form a B box-type; atypical zinc finger. Zn(2+)-binding residues include C101, C104, C124, and H129. A coiled-coil region spans residues 139–198 (VKEAAEERRRDFGEKLTRLRELTGELQRRKAALEGVSRDLQARYKAVLQEYGHEERRIQE). Residues 327–347 (MDMSPEEVAPSPRASPAKQRS) are disordered. Phosphoserine is present on residues S330, S337, and S341. NHL repeat units lie at residues 360-403 (LKKM…FNRK), 417-460 (DSFV…YTMD), 461-501 (GHCV…FTVD), 564-607 (GRQI…FPKG), and 608-648 (GGYS…YSYH).

The protein belongs to the TRIM/RBCC family. As to quaternary structure, it self-associates. Interacts with DTNBP1. Interacts with PIAS4/PIASY upon treatment with UVB and TNF-alpha. Interacts with AMBRA1; promoting activation of ULK1 through unanchored 'Lys-63'-linked polyubiquitin chains. Interacts with TICAM1 and TAX1BP1; these interactions target TICAM1 to TAX1BP1-mediated selective autophagic degradation. Ubiquitinated. Post-translationally, phosphorylation at Ser-56 by CHEK2 under oxidative stress, activates the E3 ligase activity and promotes ATG7 ubiquitination leading to positive regulation of the autophagosme assembly. As to expression, ubiquitous. High expression in brain.

The protein resides in the cytoplasm. The catalysed reaction is S-ubiquitinyl-[E2 ubiquitin-conjugating enzyme]-L-cysteine + [acceptor protein]-L-lysine = [E2 ubiquitin-conjugating enzyme]-L-cysteine + N(6)-ubiquitinyl-[acceptor protein]-L-lysine.. Its pathway is protein modification; protein ubiquitination. In terms of biological role, E3 ubiquitin ligase that plays a role in various biological processes including neural stem cell differentiation, innate immunity, inflammatory resonse and autophagy. Plays a role in virus-triggered induction of IFN-beta and TNF-alpha by mediating the ubiquitination of STING1. Mechanistically, targets STING1 for 'Lys-63'-linked ubiquitination which promotes the interaction of STING1 with TBK1. Regulates bacterial clearance and promotes autophagy in Mycobacterium tuberculosis-infected macrophages. Negatively regulates TLR3/4-mediated innate immune and inflammatory response by triggering the autophagic degradation of TICAM1 in an E3 activity-independent manner. Plays an essential role in oxidative stress induced cell death by inducing loss of transmembrane potential and enhancing mitochondrial reactive oxygen species (ROS) production during oxidative stress conditions. Ubiquitinates XIAP and targets it for proteasomal degradation. Ubiquitinates DTNBP1 (dysbindin) and promotes its degradation. May ubiquitinate BBS2. Ubiquitinates PIAS4/PIASY and promotes its degradation in keratinocytes treated with UVB and TNF-alpha. Also acts as a regulator of autophagy by mediating formation of unanchored 'Lys-63'-linked polyubiquitin chains that activate ULK1: interaction with AMBRA1 is required for ULK1 activation. Positively regulates dendritic branching by promoting ubiquitination and subsequent degradation of the epigenetic factor CDYL. Under metabolic stress and phosphorylation by CHK2, mediates 'Lys-63'-linked ubiquitination of ATG7 at 'Lys-41' to initiate autophagy. The protein is E3 ubiquitin-protein ligase TRIM32 of Mus musculus (Mouse).